Here is a 439-residue protein sequence, read N- to C-terminus: Putative phosphatidate cytidylyltransferase (439 aa).

Positions 1-37 are disordered; the sequence is MARKRTNKRNNSDKENGNVGVVQNKDSASSKTTEPAR. Ser-12 is subject to Phosphoserine. Over residues 24–33 the composition is skewed to polar residues; it reads NKDSASSKTT. 7 helical membrane-spanning segments follow: residues 52–71, 76–98, 110–130, 145–165, 180–199, 245–265, and 321–341; these read FITR…TALA, WVVL…IASV, FINW…SIYA, LVLH…VLFV, FCWT…FMIN, GFLG…YVLM, and FHLA…GFFA.

Belongs to the CDS family. The cofactor is Mg(2+).

The protein resides in the endoplasmic reticulum membrane. The catalysed reaction is a 1,2-diacyl-sn-glycero-3-phosphate + CTP + H(+) = a CDP-1,2-diacyl-sn-glycerol + diphosphate. It functions in the pathway phospholipid metabolism; CDP-diacylglycerol biosynthesis; CDP-diacylglycerol from sn-glycerol 3-phosphate: step 3/3. In terms of biological role, supplies CDP-diacylglycerol, which may play an important role as both a precursor to phosphoinositide biosynthesis in the plasma membrane and as a negative effector of phosphatidylinositol 4-kinase activity, thereby exerting an effect on cell proliferation via a lipid-dependent signal transduction cascade. This chain is Putative phosphatidate cytidylyltransferase, found in Schizosaccharomyces pombe (strain 972 / ATCC 24843) (Fission yeast).